Consider the following 262-residue polypeptide: Octopine permease ATP-binding protein P (262 aa).

Residues 9–254 form the ABC transporter domain; that stretch reads VQLKDIRKNF…PRTDRFRQFL (246 aa). 41-48 contributes to the ATP binding site; sequence GSSGSGKS.

This sequence belongs to the ABC transporter superfamily.

The protein localises to the cell inner membrane. In terms of biological role, component of the octopine active transport system probably consisting of four subunits: Q, M, P and T. In Rhizobium radiobacter (Agrobacterium tumefaciens), this protein is Octopine permease ATP-binding protein P (occP).